Here is a 237-residue protein sequence, read N- to C-terminus: Demethylmenaquinone methyltransferase (237 aa).

Residues Thr-58, Asp-79, and 106–107 (NA) contribute to the S-adenosyl-L-methionine site.

Belongs to the class I-like SAM-binding methyltransferase superfamily. MenG/UbiE family.

It carries out the reaction a 2-demethylmenaquinol + S-adenosyl-L-methionine = a menaquinol + S-adenosyl-L-homocysteine + H(+). It functions in the pathway quinol/quinone metabolism; menaquinone biosynthesis; menaquinol from 1,4-dihydroxy-2-naphthoate: step 2/2. Functionally, methyltransferase required for the conversion of demethylmenaquinol (DMKH2) to menaquinol (MKH2). This chain is Demethylmenaquinone methyltransferase, found in Bacillus cytotoxicus (strain DSM 22905 / CIP 110041 / 391-98 / NVH 391-98).